We begin with the raw amino-acid sequence, 454 residues long: tRNA modification GTPase MnmE (454 aa).

Positions 26, 84, and 123 each coordinate (6S)-5-formyl-5,6,7,8-tetrahydrofolate. One can recognise a TrmE-type G domain in the interval 219–378 (GLQVVIAGKP…LVDAITAHAG (160 aa)). Residue Asn229 coordinates K(+). Residues 229 to 234 (NAGKSS), 248 to 254 (TDIAGTT), and 273 to 276 (DTAG) each bind GTP. Ser233 provides a ligand contact to Mg(2+). Residues Thr248, Ile250, and Thr253 each contribute to the K(+) site. Mg(2+) is bound at residue Thr254. Residue Lys454 coordinates (6S)-5-formyl-5,6,7,8-tetrahydrofolate.

Belongs to the TRAFAC class TrmE-Era-EngA-EngB-Septin-like GTPase superfamily. TrmE GTPase family. As to quaternary structure, homodimer. Heterotetramer of two MnmE and two MnmG subunits. Requires K(+) as cofactor.

It localises to the cytoplasm. Exhibits a very high intrinsic GTPase hydrolysis rate. Involved in the addition of a carboxymethylaminomethyl (cmnm) group at the wobble position (U34) of certain tRNAs, forming tRNA-cmnm(5)s(2)U34. The protein is tRNA modification GTPase MnmE of Acinetobacter baumannii (strain AYE).